We begin with the raw amino-acid sequence, 241 residues long: Triosephosphate isomerase (241 aa).

Substrate is bound at residue 9–11; that stretch reads NWK. Histidine 96 serves as the catalytic Electrophile. The Proton acceptor role is filled by glutamate 165. Substrate is bound by residues glycine 171, serine 204, and 225 to 226; that span reads GG.

This sequence belongs to the triosephosphate isomerase family. In terms of assembly, homodimer.

It localises to the cytoplasm. The catalysed reaction is D-glyceraldehyde 3-phosphate = dihydroxyacetone phosphate. Its pathway is carbohydrate biosynthesis; gluconeogenesis. The protein operates within carbohydrate degradation; glycolysis; D-glyceraldehyde 3-phosphate from glycerone phosphate: step 1/1. Functionally, involved in the gluconeogenesis. Catalyzes stereospecifically the conversion of dihydroxyacetone phosphate (DHAP) to D-glyceraldehyde-3-phosphate (G3P). The sequence is that of Triosephosphate isomerase from Trichodesmium erythraeum (strain IMS101).